Reading from the N-terminus, the 375-residue chain is Killer cell immunoglobulin-like receptor 2DL5B (375 aa).

An N-terminal signal peptide occupies residues 1–21; that stretch reads MSLMVVSMACVGFFLLQGAWT. Over 22–238 the chain is Extracellular; the sequence is HEGGQDKPLL…PSSKTGIRRH (217 aa). 2 consecutive Ig-like C2-type domains span residues 42-102 and 137-200; these read GGHV…HPRS and GENV…LHDS. Disulfide bonds link C49–C95 and C144–C193. Residues 213–233 are disordered; it reads VSVTGNSSSSSSSPTEPSSKT. N218 carries an N-linked (GlcNAc...) asparagine glycan. Over residues 219 to 231 the composition is skewed to low complexity; that stretch reads SSSSSSSPTEPSS. A helical membrane pass occupies residues 239 to 259; sequence LHILIGTSVAIILFIILFFFL. Topologically, residues 260-375 are cytoplasmic; the sequence is LHCCCSNKKN…ASSHVPAAGI (116 aa). Residues 334–375 form a disordered region; that stretch reads AKPRSLSPAHKHHSQALRGSSRETTALSQNRVASSHVPAAGI. Residues 355 to 366 are compositionally biased toward polar residues; that stretch reads RETTALSQNRVA.

It belongs to the immunoglobulin superfamily.

It is found in the cell membrane. Functionally, receptor on natural killer (NK) cells for HLA-C alleles. Inhibits the activity of NK cells thus preventing cell lysis. The chain is Killer cell immunoglobulin-like receptor 2DL5B (KIR2DL5B) from Homo sapiens (Human).